A 743-amino-acid polypeptide reads, in one-letter code: Putative pentatricopeptide repeat-containing protein At1g68930 (743 aa).

PPR repeat units lie at residues 40–70 (ETFLYNNIVHAYALMKSSTYARRVFDRIPQP), 71–101 (NLFSWNNLLLAYSKAGLISEMESTFEKLPDR), 102–132 (DGVTWNVLIEGYSLSGLVGAAVKAYNTMMRD), 138–172 (TRVTLMTMLKLSSSNGHVSLGKQIHGQVIKLGFES), 173–203 (YLLVGSPLLYMYANVGCISDAKKVFYGLDDR), 204–233 (NTVMYNSLMGGLLACGMIEDALQLFRGMEK), 234–268 (DSVSWAAMIKGLAQNGLAKEAIECFREMKVQGLKM), 269–303 (DQYPFGSVLPACGGLGAINEGKQIHACIIRTNFQD), 304–334 (HIYVGSALIDMYCKCKCLHYAKTVFDRMKQK), 335–369 (NVVSWTAMVVGYGQTGRAEEAVKIFLDMQRSGIDP), 370–404 (DHYTLGQAISACANVSSLEEGSQFHGKAITSGLIH), 405–435 (YVTVSNSLVTLYGKCGDIDDSTRLFNEMNVR), 436–470 (DAVSWTAMVSAYAQFGRAVETIQLFDKMVQHGLKP), 471–506 (DGVTLTGVISACSRAGLVEKGQRYFKLMTSEYGIVP), and 507–537 (SIGHYSCMIDLFSRSGRLEEAMRFINGMPFP). The segment at 542-617 (GWTTLLSACR…EPGQSWIKWK (76 aa)) is type E motif. The interval 618–648 (GKLHSFSADDESSPYLDQIYAKLEELNNKII) is type E(+) motif. The tract at residues 649–743 (DNGYKPDTSF…DGTCSCGDFW (95 aa)) is type DYW motif.

Belongs to the PPR family. PCMP-H subfamily.

The chain is Putative pentatricopeptide repeat-containing protein At1g68930 (PCMP-H22) from Arabidopsis thaliana (Mouse-ear cress).